The sequence spans 391 residues: Protein CAJ1 (391 aa).

Residues 4–73 (ETEYYDILGI…RSKYDQFGKE (70 aa)) enclose the J domain. The interval 119 to 161 (KEDEEGTAATETEKADESTDGGMVKHDTNKAESLKKDKLSKEQ) is disordered. Residues 129–161 (ETEKADESTDGGMVKHDTNKAESLKKDKLSKEQ) show a composition bias toward basic and acidic residues. Residue K132 forms a Glycyl lysine isopeptide (Lys-Gly) (interchain with G-Cter in ubiquitin) linkage.

This is Protein CAJ1 (CAJ1) from Saccharomyces cerevisiae (strain ATCC 204508 / S288c) (Baker's yeast).